A 167-amino-acid polypeptide reads, in one-letter code: Endoribonuclease YbeY (167 aa).

The Zn(2+) site is built by H126, H130, and H136.

This sequence belongs to the endoribonuclease YbeY family. Requires Zn(2+) as cofactor.

Its subcellular location is the cytoplasm. Functionally, single strand-specific metallo-endoribonuclease involved in late-stage 70S ribosome quality control and in maturation of the 3' terminus of the 16S rRNA. The sequence is that of Endoribonuclease YbeY from Novosphingobium aromaticivorans (strain ATCC 700278 / DSM 12444 / CCUG 56034 / CIP 105152 / NBRC 16084 / F199).